Consider the following 462-residue polypeptide: Probable acid phosphatase SPBC4.06 (462 aa).

The Nucleophile role is filled by H35. The active-site Proton donor is the D330.

Belongs to the histidine acid phosphatase family.

Its subcellular location is the mitochondrion. The enzyme catalyses a phosphate monoester + H2O = an alcohol + phosphate. The chain is Probable acid phosphatase SPBC4.06 from Schizosaccharomyces pombe (strain 972 / ATCC 24843) (Fission yeast).